Reading from the N-terminus, the 434-residue chain is Serine hydroxymethyltransferase (434 aa).

(6S)-5,6,7,8-tetrahydrofolate is bound by residues Leu128 and 132 to 134 (GHL). Lys237 carries the post-translational modification N6-(pyridoxal phosphate)lysine.

Belongs to the SHMT family. As to quaternary structure, homodimer. It depends on pyridoxal 5'-phosphate as a cofactor.

It is found in the cytoplasm. It catalyses the reaction (6R)-5,10-methylene-5,6,7,8-tetrahydrofolate + glycine + H2O = (6S)-5,6,7,8-tetrahydrofolate + L-serine. Its pathway is one-carbon metabolism; tetrahydrofolate interconversion. It functions in the pathway amino-acid biosynthesis; glycine biosynthesis; glycine from L-serine: step 1/1. Functionally, catalyzes the reversible interconversion of serine and glycine with tetrahydrofolate (THF) serving as the one-carbon carrier. This reaction serves as the major source of one-carbon groups required for the biosynthesis of purines, thymidylate, methionine, and other important biomolecules. Also exhibits THF-independent aldolase activity toward beta-hydroxyamino acids, producing glycine and aldehydes, via a retro-aldol mechanism. In Corynebacterium efficiens (strain DSM 44549 / YS-314 / AJ 12310 / JCM 11189 / NBRC 100395), this protein is Serine hydroxymethyltransferase.